Consider the following 178-residue polypeptide: Large ribosomal subunit protein uL6 (178 aa).

This sequence belongs to the universal ribosomal protein uL6 family. Part of the 50S ribosomal subunit.

In terms of biological role, this protein binds to the 23S rRNA, and is important in its secondary structure. It is located near the subunit interface in the base of the L7/L12 stalk, and near the tRNA binding site of the peptidyltransferase center. This Methanobrevibacter smithii (strain ATCC 35061 / DSM 861 / OCM 144 / PS) protein is Large ribosomal subunit protein uL6.